The primary structure comprises 100 residues: UPF0473 protein Csac_1599 (100 aa).

The protein belongs to the UPF0473 family.

The polypeptide is UPF0473 protein Csac_1599 (Caldicellulosiruptor saccharolyticus (strain ATCC 43494 / DSM 8903 / Tp8T 6331)).